We begin with the raw amino-acid sequence, 806 residues long: Phenylalanine--tRNA ligase beta subunit (806 aa).

The 116-residue stretch at 39–154 (SAGLKKIVVG…EAIAPGTDVY (116 aa)) folds into the tRNA-binding domain. The 76-residue stretch at 410 to 485 (PQPKVIQFDS…RLYGYDNLPS (76 aa)) folds into the B5 domain. Positions 463, 469, 472, and 473 each coordinate Mg(2+). One can recognise an FDX-ACB domain in the interval 713–806 (PKFPEVTRDI…LVATFQAKVR (94 aa)).

It belongs to the phenylalanyl-tRNA synthetase beta subunit family. Type 1 subfamily. In terms of assembly, tetramer of two alpha and two beta subunits. Mg(2+) serves as cofactor.

It localises to the cytoplasm. It carries out the reaction tRNA(Phe) + L-phenylalanine + ATP = L-phenylalanyl-tRNA(Phe) + AMP + diphosphate + H(+). The polypeptide is Phenylalanine--tRNA ligase beta subunit (Latilactobacillus sakei subsp. sakei (strain 23K) (Lactobacillus sakei subsp. sakei)).